A 120-amino-acid polypeptide reads, in one-letter code: Large ribosomal subunit protein eL18 (120 aa).

This sequence belongs to the eukaryotic ribosomal protein eL18 family.

The polypeptide is Large ribosomal subunit protein eL18 (Thermoplasma acidophilum (strain ATCC 25905 / DSM 1728 / JCM 9062 / NBRC 15155 / AMRC-C165)).